Reading from the N-terminus, the 357-residue chain is Putative F-box/kelch-repeat protein At5g38680 (357 aa).

The F-box domain maps to 14-61 (NSNPSLPDALIISCIARVSRLYYPILSFVSKSFRSLLASPELYKERSL). Kelch repeat units follow at residues 131 to 175 (NIYN…VLDG), 177 to 224 (IYVA…SKSL), 226 to 267 (IDEK…YCEI), and 268 to 313 (ENVL…GGKK).

This Arabidopsis thaliana (Mouse-ear cress) protein is Putative F-box/kelch-repeat protein At5g38680.